The following is a 246-amino-acid chain: Type III pantothenate kinase (246 aa).

6 to 13 (DVGNTHSV) contacts ATP. Residue 103 to 106 (GADR) coordinates substrate. The active-site Proton acceptor is Asp105. A K(+)-binding site is contributed by Asp125. Residue Thr128 participates in ATP binding. Position 179 (Thr179) interacts with substrate.

The protein belongs to the type III pantothenate kinase family. As to quaternary structure, homodimer. It depends on NH4(+) as a cofactor. The cofactor is K(+).

The protein resides in the cytoplasm. It catalyses the reaction (R)-pantothenate + ATP = (R)-4'-phosphopantothenate + ADP + H(+). It functions in the pathway cofactor biosynthesis; coenzyme A biosynthesis; CoA from (R)-pantothenate: step 1/5. Catalyzes the phosphorylation of pantothenate (Pan), the first step in CoA biosynthesis. The sequence is that of Type III pantothenate kinase (coaX) from Thermotoga maritima (strain ATCC 43589 / DSM 3109 / JCM 10099 / NBRC 100826 / MSB8).